A 529-amino-acid chain; its full sequence is Membrane-bound lytic murein transglycosylase F (529 aa).

An N-terminal signal peptide occupies residues 1–27 (MPIFNLHQLRNFLFIIATTLFLSACQI). The segment at 28–287 (ESKPTSELDQ…RLEEKYIGHI (260 aa)) is non-LT domain. The LT domain stretch occupies residues 288–529 (GSFDYVDTRA…QATLTTEVQP (242 aa)). Glutamate 332 is a catalytic residue. The disordered stretch occupies residues 510–529 (EALSPDVGVSQATLTTEVQP). The span at 519–529 (SQATLTTEVQP) shows a compositional bias: polar residues.

This sequence in the N-terminal section; belongs to the bacterial solute-binding protein 3 family. The protein in the C-terminal section; belongs to the transglycosylase Slt family.

The protein localises to the cell outer membrane. The enzyme catalyses Exolytic cleavage of the (1-&gt;4)-beta-glycosidic linkage between N-acetylmuramic acid (MurNAc) and N-acetylglucosamine (GlcNAc) residues in peptidoglycan, from either the reducing or the non-reducing ends of the peptidoglycan chains, with concomitant formation of a 1,6-anhydrobond in the MurNAc residue.. Functionally, murein-degrading enzyme that degrades murein glycan strands and insoluble, high-molecular weight murein sacculi, with the concomitant formation of a 1,6-anhydromuramoyl product. Lytic transglycosylases (LTs) play an integral role in the metabolism of the peptidoglycan (PG) sacculus. Their lytic action creates space within the PG sacculus to allow for its expansion as well as for the insertion of various structures such as secretion systems and flagella. This Vibrio vulnificus (strain CMCP6) protein is Membrane-bound lytic murein transglycosylase F.